A 395-amino-acid polypeptide reads, in one-letter code: Zinc-regulated GTPase metalloprotein activator 1E (395 aa).

The tract at residues 1-22 (MLPAVGSVDEEEDPAEEDCPEL) is disordered. Acidic residues predominate over residues 8-20 (VDEEEDPAEEDCP). The short motif at 17–24 (EDCPELVP) is the psi-PxLVp motif element. 49–56 (GYLGAGKT) contributes to the GTP binding site. Residues cysteine 107, cysteine 109, and cysteine 110 each contribute to the Zn(2+) site. The CXCC motif motif lies at 107 to 110 (CLCC). GTP contacts are provided by residues 110-114 (CSVKD) and 203-206 (NKTD). A CobW C-terminal domain is found at 274 to 377 (IVTITFEVPG…ILKQLFIATV (104 aa)).

The protein belongs to the SIMIBI class G3E GTPase family. ZNG1 subfamily.

Its subcellular location is the nucleus. It carries out the reaction GTP + H2O = GDP + phosphate + H(+). In terms of biological role, zinc chaperone that directly transfers zinc cofactor to target metalloproteins, thereby activating them. Catalyzes zinc insertion into the active site of methionine aminopeptidase METAP1, which function to cleave the initiator methionine from polypeptides during or after protein translation. Mechanistically, the N-terminal psi-PxLVp motif binds to the C6H2-type zinc finger of inactive form of METAP1. After formation of the docked complex, zinc is transferred from the CXCC motif in the GTPase domain of ZNG1E to the zinc binding site in the peptidase domain of METAP1 in a process requiring GTP hydrolysis. GTP/GDP exchange is required for release of active METAP1. The polypeptide is Zinc-regulated GTPase metalloprotein activator 1E (Homo sapiens (Human)).